The chain runs to 1259 residues: Trafficking protein particle complex subunit 10 (1259 aa).

S708 carries the post-translational modification Phosphoserine. Residues 1189-1222 (LSVDKHGDDQPDSSSLKSRGSVHSACSSEHKGLP) form a disordered region.

The protein belongs to the TRAPPC10 family. In terms of assembly, specific component of the multisubunit TRAPP II complex, which includes at least TRAPPC1, TRAPPC2, TRAPPC3, TRAPPC4, TRAPPC5, TRAPPC6A/B, TRAPPC9, TRAPPC10 and TRAPPC14. TRAPPC9, TRAPPC10 and TRAPPC14 are specific subunits of the TRAPP II complex. Interacts with TRAPPC14. Expressed in all tissues examined.

It localises to the golgi apparatus. The protein resides in the cis-Golgi network. Specific subunit of the TRAPP (transport protein particle) II complex, a highly conserved vesicle tethering complex that functions in late Golgi trafficking as a membrane tether. The polypeptide is Trafficking protein particle complex subunit 10 (TRAPPC10) (Homo sapiens (Human)).